A 434-amino-acid polypeptide reads, in one-letter code: Alpha-enolase (434 aa).

Ser-40 serves as a coordination point for Mg(2+). Residues His-158 and Glu-167 each contribute to the substrate site. Glu-210 serves as the catalytic Proton donor. The Mg(2+) site is built by Asp-245, Glu-293, and Asp-318. Glu-293 and Asp-318 together coordinate substrate. Lys-343 (proton acceptor) is an active-site residue. Substrate-binding positions include 370-373 (SHRS) and Lys-394.

This sequence belongs to the enolase family. In terms of assembly, homodimer. Mg(2+) serves as cofactor.

The protein localises to the cytoplasm. It catalyses the reaction (2R)-2-phosphoglycerate = phosphoenolpyruvate + H2O. It participates in carbohydrate degradation; glycolysis; pyruvate from D-glyceraldehyde 3-phosphate: step 4/5. The polypeptide is Alpha-enolase (Alligator mississippiensis (American alligator)).